Consider the following 382-residue polypeptide: V-type proton ATPase subunit C 1 (382 aa).

Threonine 2 is modified (N-acetylthreonine).

This sequence belongs to the V-ATPase C subunit family. V-ATPase is a heteromultimeric enzyme made up of two complexes: the ATP-hydrolytic V1 complex and the proton translocation V0 complex. The V1 complex consists of three catalytic AB heterodimers that form a heterohexamer, three peripheral stalks each consisting of EG heterodimers, one central rotor including subunits D and F, and the regulatory subunits C and H. The proton translocation complex V0 consists of the proton transport subunit a, a ring of proteolipid subunits c9c'', rotary subunit d, subunits e and f, and two accessory subunits.

Its function is as follows. Subunit of the V1 complex of vacuolar(H+)-ATPase (V-ATPase), a multisubunit enzyme composed of a peripheral complex (V1) that hydrolyzes ATP and a membrane integral complex (V0) that translocates protons. V-ATPase is responsible for acidifying and maintaining the pH of intracellular compartments and in some cell types, is targeted to the plasma membrane, where it is responsible for acidifying the extracellular environment. Subunit C is necessary for the assembly of the catalytic sector of the enzyme and is likely to have a specific function in its catalytic activity. The chain is V-type proton ATPase subunit C 1 (atp6v1c1) from Xenopus tropicalis (Western clawed frog).